The chain runs to 190 residues: Large ribosomal subunit protein uL22 (190 aa).

The disordered stretch occupies residues 111-190 (SVQSTKAKAK…TKKKTEGEEK (80 aa)). Residues 125–147 (IKSEDSKNSLKVTESKADSKVDA) show a composition bias toward basic and acidic residues. Residues 167–178 (AKVATTKSTATR) show a composition bias toward low complexity.

It belongs to the universal ribosomal protein uL22 family. As to quaternary structure, part of the 50S ribosomal subunit.

In terms of biological role, this protein binds specifically to 23S rRNA; its binding is stimulated by other ribosomal proteins, e.g. L4, L17, and L20. It is important during the early stages of 50S assembly. It makes multiple contacts with different domains of the 23S rRNA in the assembled 50S subunit and ribosome. Its function is as follows. The globular domain of the protein is located near the polypeptide exit tunnel on the outside of the subunit, while an extended beta-hairpin is found that lines the wall of the exit tunnel in the center of the 70S ribosome. This is Large ribosomal subunit protein uL22 from Helicobacter hepaticus (strain ATCC 51449 / 3B1).